We begin with the raw amino-acid sequence, 396 residues long: L-lactate dehydrogenase (396 aa).

One can recognise an FMN hydroxy acid dehydrogenase domain in the interval 1–380 (MIISAASDYR…TQDSLVQGLG (380 aa)). Residue Y24 participates in substrate binding. FMN contacts are provided by S106 and Q127. Y129 lines the substrate pocket. T155 contributes to the FMN binding site. R164 is a binding site for substrate. Position 251 (K251) interacts with FMN. Catalysis depends on H275, which acts as the Proton acceptor. A substrate-binding site is contributed by R278. 306 to 330 (DSGIRNGLDVVRMIALGADTVLLGR) provides a ligand contact to FMN.

The protein belongs to the FMN-dependent alpha-hydroxy acid dehydrogenase family. FMN serves as cofactor.

Its subcellular location is the cell inner membrane. It carries out the reaction (S)-lactate + A = pyruvate + AH2. Its function is as follows. Catalyzes the conversion of L-lactate to pyruvate. Is coupled to the respiratory chain. In Shigella flexneri serotype 5b (strain 8401), this protein is L-lactate dehydrogenase.